The sequence spans 646 residues: Threonine--tRNA ligase (646 aa).

Residues 1 to 61 (MIKITFPDGS…NEDADFVLYK (61 aa)) form the TGS domain. Positions 242–541 (DHRKIGKEMQ…LIEHTAGKFP (300 aa)) are catalytic. Zn(2+) contacts are provided by C337, H388, and H518.

This sequence belongs to the class-II aminoacyl-tRNA synthetase family. In terms of assembly, homodimer. Requires Zn(2+) as cofactor.

The protein resides in the cytoplasm. The catalysed reaction is tRNA(Thr) + L-threonine + ATP = L-threonyl-tRNA(Thr) + AMP + diphosphate + H(+). In terms of biological role, catalyzes the attachment of threonine to tRNA(Thr) in a two-step reaction: L-threonine is first activated by ATP to form Thr-AMP and then transferred to the acceptor end of tRNA(Thr). Also edits incorrectly charged L-seryl-tRNA(Thr). In Bacteroides thetaiotaomicron (strain ATCC 29148 / DSM 2079 / JCM 5827 / CCUG 10774 / NCTC 10582 / VPI-5482 / E50), this protein is Threonine--tRNA ligase.